The primary structure comprises 362 residues: Phosphoserine aminotransferase (362 aa).

Arginine 42 serves as a coordination point for L-glutamate. Pyridoxal 5'-phosphate contacts are provided by residues 76-77 (AR), tryptophan 102, threonine 153, aspartate 174, and glutamine 197. Lysine 198 is subject to N6-(pyridoxal phosphate)lysine. 239–240 (NT) contacts pyridoxal 5'-phosphate.

Belongs to the class-V pyridoxal-phosphate-dependent aminotransferase family. SerC subfamily. Homodimer. It depends on pyridoxal 5'-phosphate as a cofactor.

Its subcellular location is the cytoplasm. It catalyses the reaction O-phospho-L-serine + 2-oxoglutarate = 3-phosphooxypyruvate + L-glutamate. The catalysed reaction is 4-(phosphooxy)-L-threonine + 2-oxoglutarate = (R)-3-hydroxy-2-oxo-4-phosphooxybutanoate + L-glutamate. The protein operates within amino-acid biosynthesis; L-serine biosynthesis; L-serine from 3-phospho-D-glycerate: step 2/3. It participates in cofactor biosynthesis; pyridoxine 5'-phosphate biosynthesis; pyridoxine 5'-phosphate from D-erythrose 4-phosphate: step 3/5. Functionally, catalyzes the reversible conversion of 3-phosphohydroxypyruvate to phosphoserine and of 3-hydroxy-2-oxo-4-phosphonooxybutanoate to phosphohydroxythreonine. This chain is Phosphoserine aminotransferase, found in Proteus mirabilis (strain HI4320).